Here is a 771-residue protein sequence, read N- to C-terminus: Assimilatory nitrate reductase electron transfer subunit (771 aa).

Residue 43–79 (YNRILLSSVLQGEASLDDITLNSKDWYDKHGITLYTG) coordinates FAD. [2Fe-2S] cluster is bound by residues Cys414, Cys416, Cys449, and Cys452.

It depends on FAD as a cofactor. [2Fe-2S] cluster serves as cofactor.

Its function is as follows. Required for nitrate assimilation. In Bacillus subtilis (strain 168), this protein is Assimilatory nitrate reductase electron transfer subunit (nasB).